Here is a 310-residue protein sequence, read N- to C-terminus: Beta-ketoacyl-[acyl-carrier-protein] synthase III (310 aa).

Active-site residues include cysteine 116 and histidine 239. The segment at 240–244 (QANYR) is ACP-binding. Residue asparagine 269 is part of the active site.

This sequence belongs to the thiolase-like superfamily. FabH family. In terms of assembly, homodimer.

It is found in the cytoplasm. The catalysed reaction is malonyl-[ACP] + acetyl-CoA + H(+) = 3-oxobutanoyl-[ACP] + CO2 + CoA. It participates in lipid metabolism; fatty acid biosynthesis. Catalyzes the condensation reaction of fatty acid synthesis by the addition to an acyl acceptor of two carbons from malonyl-ACP. Catalyzes the first condensation reaction which initiates fatty acid synthesis and may therefore play a role in governing the total rate of fatty acid production. Possesses both acetoacetyl-ACP synthase and acetyl transacylase activities. Its substrate specificity determines the biosynthesis of branched-chain and/or straight-chain of fatty acids. The protein is Beta-ketoacyl-[acyl-carrier-protein] synthase III of Acholeplasma laidlawii (strain PG-8A).